Reading from the N-terminus, the 441-residue chain is UDP-N-acetylmuramoylalanine--D-glutamate ligase (441 aa).

113–119 is a binding site for ATP; the sequence is GSNAKST.

This sequence belongs to the MurCDEF family.

The protein localises to the cytoplasm. The catalysed reaction is UDP-N-acetyl-alpha-D-muramoyl-L-alanine + D-glutamate + ATP = UDP-N-acetyl-alpha-D-muramoyl-L-alanyl-D-glutamate + ADP + phosphate + H(+). Its pathway is cell wall biogenesis; peptidoglycan biosynthesis. In terms of biological role, cell wall formation. Catalyzes the addition of glutamate to the nucleotide precursor UDP-N-acetylmuramoyl-L-alanine (UMA). In Alcanivorax borkumensis (strain ATCC 700651 / DSM 11573 / NCIMB 13689 / SK2), this protein is UDP-N-acetylmuramoylalanine--D-glutamate ligase.